The primary structure comprises 206 residues: uncharacterized protein (206 aa).

Its subcellular location is the plastid. It localises to the cyanelle. This is an uncharacterized protein from Cyanophora paradoxa.